A 93-amino-acid polypeptide reads, in one-letter code: DNA-directed RNA polymerase subunit omega (93 aa).

Belongs to the RNA polymerase subunit omega family. The RNAP catalytic core consists of 2 alpha, 1 beta, 1 beta' and 1 omega subunit. When a sigma factor is associated with the core the holoenzyme is formed, which can initiate transcription.

The catalysed reaction is RNA(n) + a ribonucleoside 5'-triphosphate = RNA(n+1) + diphosphate. Functionally, promotes RNA polymerase assembly. Latches the N- and C-terminal regions of the beta' subunit thereby facilitating its interaction with the beta and alpha subunits. The sequence is that of DNA-directed RNA polymerase subunit omega from Actinobacillus pleuropneumoniae serotype 7 (strain AP76).